We begin with the raw amino-acid sequence, 238 residues long: Type III pantothenate kinase (238 aa).

An ATP-binding site is contributed by 6-13 (DSGNTRIK). Substrate contacts are provided by residues Y90 and 97 to 100 (GVDR). Residue D99 is the Proton acceptor of the active site. T122 contributes to the ATP binding site. Residue T172 participates in substrate binding.

It belongs to the type III pantothenate kinase family. As to quaternary structure, homodimer. NH4(+) serves as cofactor. The cofactor is K(+).

The protein resides in the cytoplasm. The enzyme catalyses (R)-pantothenate + ATP = (R)-4'-phosphopantothenate + ADP + H(+). The protein operates within cofactor biosynthesis; coenzyme A biosynthesis; CoA from (R)-pantothenate: step 1/5. Catalyzes the phosphorylation of pantothenate (Pan), the first step in CoA biosynthesis. This Dechloromonas aromatica (strain RCB) protein is Type III pantothenate kinase.